Reading from the N-terminus, the 631-residue chain is Phosphomethylpyrimidine synthase (631 aa).

Residues Asn-239, Met-268, Tyr-297, His-333, 353-355 (SRG), 394-397 (DGLR), and Glu-433 each bind substrate. His-437 provides a ligand contact to Zn(2+). Residue Tyr-460 coordinates substrate. Position 501 (His-501) interacts with Zn(2+). The [4Fe-4S] cluster site is built by Cys-581, Cys-584, and Cys-589.

Belongs to the ThiC family. Homodimer. The cofactor is [4Fe-4S] cluster.

It catalyses the reaction 5-amino-1-(5-phospho-beta-D-ribosyl)imidazole + S-adenosyl-L-methionine = 4-amino-2-methyl-5-(phosphooxymethyl)pyrimidine + CO + 5'-deoxyadenosine + formate + L-methionine + 3 H(+). The protein operates within cofactor biosynthesis; thiamine diphosphate biosynthesis. In terms of biological role, catalyzes the synthesis of the hydroxymethylpyrimidine phosphate (HMP-P) moiety of thiamine from aminoimidazole ribotide (AIR) in a radical S-adenosyl-L-methionine (SAM)-dependent reaction. The sequence is that of Phosphomethylpyrimidine synthase from Shigella dysenteriae serotype 1 (strain Sd197).